Here is a 410-residue protein sequence, read N- to C-terminus: MLRHGLFKDRRVFDENYIPPELRVRRGEAEALARIYLNRLLSGAGLSDVNMIYGSIGRVGIGKTTLAKFTVKRVSEAAAKEGLTVKQAYVNAFNAPNLYTILSLIVRQTGYPIQVRGAPALDILKALVDNLYVENHYLLVILDEFQSMLSSPRIAAEDLYTLLRVHEEIPSRDGVNRIGFLLVASDVRALSYMREKIPQVESQIGFKLHLPAYKSRELYTILEQRAELGLRDTVWEPRHLELISDVYGEDKGGDGSARRAIVALKMACEMAEAMGRDSLSEDLVRKAVSENEAASIQTHELEALSIHELIILRLIAEATLGGMEWINAGLLRQRYEDASLTMYNVKPRGYTQYHIYLKHLTSLGLVDAKPSGRGMRGRTTLFRLAPHLPADRLIEVVDNIIQAKMASGYE.

Residues 60 to 65 (GIGKTT), tyrosine 213, and arginine 225 contribute to the ATP site.

This sequence belongs to the CDC6/cdc18 family.

Involved in regulation of DNA replication. Binds DNA. This is ORC1-type DNA replication protein 2 (orc2) from Aeropyrum pernix (strain ATCC 700893 / DSM 11879 / JCM 9820 / NBRC 100138 / K1).